A 170-amino-acid polypeptide reads, in one-letter code: Orotate phosphoribosyltransferase (170 aa).

5-phospho-alpha-D-ribose 1-diphosphate contacts are provided by residues Arg-86, Lys-87, Lys-90, His-92, and 111-119 (EDVTTSGGS). Thr-115 and Arg-143 together coordinate orotate.

Belongs to the purine/pyrimidine phosphoribosyltransferase family. PyrE subfamily. In terms of assembly, homodimer. The cofactor is Mg(2+).

It catalyses the reaction orotidine 5'-phosphate + diphosphate = orotate + 5-phospho-alpha-D-ribose 1-diphosphate. It participates in pyrimidine metabolism; UMP biosynthesis via de novo pathway; UMP from orotate: step 1/2. Its function is as follows. Catalyzes the transfer of a ribosyl phosphate group from 5-phosphoribose 1-diphosphate to orotate, leading to the formation of orotidine monophosphate (OMP). The chain is Orotate phosphoribosyltransferase from Methanoculleus marisnigri (strain ATCC 35101 / DSM 1498 / JR1).